The primary structure comprises 419 residues: MAATLSVEPAGRSCWDEPLSIAVRGLAPEQPVTLRSVLRDEKGMLFRAHARYRADSHGELDLARTPALGGSFSGLEPMGLLWAMEPDRPFWRLIKRDVQIPFVVELEVLDGHEPDGGQRLARAVHERHFMAPGVRRVPVREGRVRATLFLPPGKGQFPGIIDLYGSIGGLCEHRASLLAGHGFAVLALAYFQFEDLPENLSDVRLEYFEEALALMLRHPQVKGPNIGLIGVSKGADLCLSMAAFLKDNITATVLINACVANTLVPLYYKDLFVPELGCDQTKNKSGLMDLRDMWNNPLEEPNHQSLIPLEKAQGPFLFLVGMDDHNWKSDVYARIACERLQAHGKDRPQIIYYPETGHCIEPPYFPPPIATVHFVLGEAVFNGGKPRAQSRAQLDAWQRIQTFFQKYLNGEKPARHSKL.

Residues Ser232, Asp324, and His358 each act as charge relay system in the active site. A Peroxisome targeting signal motif is present at residues 417-419; it reads SKL.

This sequence belongs to the C/M/P thioester hydrolase family. As to expression, highly expressed in white adipose tissue. Detected at lower levels in kidney, liver, brown adipose tissue and brain.

It localises to the peroxisome. It catalyses the reaction pristanoyl-CoA + H2O = 2,6,10,14-tetramethylpentadecanoate + CoA + H(+). The enzyme catalyses phytanoyl-CoA + H2O = 3,7,11,15-tetramethylhexadecanoate + CoA + H(+). The protein operates within lipid metabolism; fatty acid metabolism. Its function is as follows. Catalyzes the hydrolysis of acyl-CoAs into free fatty acids and coenzyme A (CoASH), regulating their respective intracellular levels. Catalyzes the hydrolysis of phytanoyl-CoA and pristanoyl-CoA, two methyl-branched fatty acids derived from phytol, that enter the body via the diet. This chain is Acyl-coenzyme A thioesterase 6, found in Mus musculus (Mouse).